A 256-amino-acid chain; its full sequence is ATP synthase peripheral stalk subunit b, mitochondrial (256 aa).

The N-terminal 42 residues, 1 to 42 (MLSRVVLSAAATAAPSLKNAAFLGPGVLQATRTFHTGQPHLV), are a transit peptide targeting the mitochondrion. Lys131 carries the post-translational modification N6-succinyllysine. Residues Lys139, Lys154, Lys162, Lys221, Lys233, and Lys244 each carry the N6-acetyllysine modification.

Belongs to the eukaryotic ATPase B chain family. As to quaternary structure, component of the ATP synthase complex composed at least of ATP5F1A/subunit alpha, ATP5F1B/subunit beta, ATP5MC1/subunit c (homooctomer), MT-ATP6/subunit a, MT-ATP8/subunit 8, ATP5ME/subunit e, ATP5MF/subunit f, ATP5MG/subunit g, ATP5MK/subunit k, ATP5MJ/subunit j, ATP5F1C/subunit gamma, ATP5F1D/subunit delta, ATP5F1E/subunit epsilon, ATP5PF/subunit F6, ATP5PB/subunit b, ATP5PD/subunit d, ATP5PO/subunit OSCP. ATP synthase complex consists of a soluble F(1) head domain (subunits alpha(3) and beta(3)) - the catalytic core - and a membrane F(0) domain - the membrane proton channel (subunits c, a, 8, e, f, g, k and j). These two domains are linked by a central stalk (subunits gamma, delta, and epsilon) rotating inside the F1 region and a stationary peripheral stalk (subunits F6, b, d, and OSCP).

It localises to the mitochondrion. Its subcellular location is the mitochondrion inner membrane. Subunit b, of the mitochondrial membrane ATP synthase complex (F(1)F(0) ATP synthase or Complex V) that produces ATP from ADP in the presence of a proton gradient across the membrane which is generated by electron transport complexes of the respiratory chain. ATP synthase complex consist of a soluble F(1) head domain - the catalytic core - and a membrane F(1) domain - the membrane proton channel. These two domains are linked by a central stalk rotating inside the F(1) region and a stationary peripheral stalk. During catalysis, ATP synthesis in the catalytic domain of F(1) is coupled via a rotary mechanism of the central stalk subunits to proton translocation. In vivo, can only synthesize ATP although its ATP hydrolase activity can be activated artificially in vitro. Part of the complex F(0) domain. Part of the complex F(0) domain and the peripheric stalk, which acts as a stator to hold the catalytic alpha(3)beta(3) subcomplex and subunit a/ATP6 static relative to the rotary elements. This chain is ATP synthase peripheral stalk subunit b, mitochondrial, found in Homo sapiens (Human).